The primary structure comprises 720 residues: MENEDHNFGTSDWWPNQLDLEILDQNSQQVDPYGEDFDYAEAFEDLDLAAVKDDLEEMMTDSKDWWPADYGHYGPLFIRMAWHSAGTYRTFDGRGGAAGGRQRLPPVDSWPDNVNLDKARRLLWPIKQKYGRKLSWGDLIILAGNVALESMGFETYGFAGGRKDDYTPDEAVDWGPEDEWETTSGDRFDADGSLKWPLGNTVMGLIYVNPEGPNGEPDLEGSAKNIRESFGKMAMNDKETVALIAGGHTFGKVHGADDPEENVGAEPAAAPIEKQGLGWENEFGEGKGPDTITSGIEGPWNTTPTQWDMSYVDNLLEYEWEPEKGPGGAWQWTTKSGELNESAPGVQDPTDTEDVMMLTTDVALKDDPDYREVLETFQENPREFQQSFSKAWYKLIHRDMGPSERFLGPEVPEETMIWQDPLPDADYDLVDDEAVAALKSELLESELSIPQLVKTAWASASTYRDSDKRGGANGARIRLEPQRSWEVNEPEQLEAALSTYEDIQAEFNDARSDDMRVSLADLIVLGGNAAIEQAAADAGYDVDVPFEPGRTDATPEQTDVESFEALKPKADGFRNYLGDDAEREPEELLVDKAELLNLTADDMTVLVGGLRALGVTHGDSELGIFTDQPGTLTNDFFTTLLDMDYEWEAASEDREVFELRDRETGDVEWTGSRVDLLFGSNTRLRAIAEVYGSDADEELFVQDFVDTWSEVMKLDRFDLE.

The tryptophyl-tyrosyl-methioninium (Trp-Tyr) (with M-233) cross-link spans 82-207; the sequence is WHSAGTYRTF…LGNTVMGLIY (126 aa). H83 functions as the Proton acceptor in the catalytic mechanism. Positions 207–233 form a cross-link, tryptophyl-tyrosyl-methioninium (Tyr-Met) (with W-82); it reads YVNPEGPNGEPDLEGSAKNIRESFGKM. H248 contacts heme b.

It belongs to the peroxidase family. Peroxidase/catalase subfamily. In terms of assembly, homodimer or homotetramer. It depends on heme b as a cofactor. Formation of the three residue Trp-Tyr-Met cross-link is important for the catalase, but not the peroxidase activity of the enzyme.

The catalysed reaction is H2O2 + AH2 = A + 2 H2O. It carries out the reaction 2 H2O2 = O2 + 2 H2O. In terms of biological role, bifunctional enzyme with both catalase and broad-spectrum peroxidase activity. The sequence is that of Catalase-peroxidase from Halobacterium salinarum (strain ATCC 29341 / DSM 671 / R1).